Consider the following 880-residue polypeptide: Probable potassium channel AKT5 (880 aa).

Topologically, residues 1 to 82 (MGIEKRKKMV…PFDPRYRAWD (82 aa)) are cytoplasmic. Residues 83 to 103 (WFLVILVLYTAWASPFEFGFL) traverse the membrane as a helical segment. At 104–111 (QTPRAPLS) the chain is on the extracellular side. Residues 112-132 (ILDNVVNGFFAVDIVLTFFVA) form a helical membrane-spanning segment. The Cytoplasmic portion of the chain corresponds to 133–153 (FLDKATYLLVDDPKRIAWRYT). Residues 154-174 (STWLIFDVVSTVPYELFGSLL) traverse the membrane as a helical segment. Residues 175–182 (HNTIQGYG) lie on the Extracellular side of the membrane. A helical; Voltage-sensor membrane pass occupies residues 183 to 203 (IFSMLRLWRLHRVSKCFARLE). Residues 204–217 (KDRKYNYFWIRCTK) lie on the Cytoplasmic side of the membrane. A helical transmembrane segment spans residues 218-238 (LLLVSLFVVHCGACFCYSIAA). Residues 239 to 265 (HYPDPSMTFMALAEANWKQKSLLIRYV) lie on the Extracellular side of the membrane. The pore-forming intramembrane region spans 266 to 285 (TAMYWSITTFSTTGYGDIHG). The Extracellular segment spans residues 286 to 291 (NNAEER). A helical transmembrane segment spans residues 292-312 (AFILFYMIFNLGLLAYIIGNM). The Cytoplasmic segment spans residues 313–880 (TNLVVHVTSR…GDFLLLLKVS (568 aa)). Residue 396–517 (LFHGISNDLL…IMNNLLQHLK (122 aa)) participates in a nucleoside 3',5'-cyclic phosphate binding. ANK repeat units lie at residues 541–570 (DLPLSLCFAAARGDDLLLHQLLKRGSNPNE), 574–603 (NGRTALHIAASKGSQYCVVLLLEHGADPNI), 607–636 (EGSVPLWEAIIGRHEENAKLLSENGATLSF), 637–667 (DTVGYFSCLAVGQNNLNALKDIVKYGGDISL), and 671–700 (NGTTALHRAVSEGNLEIVQFLLEKGADMDK). Positions 809–880 (VGGVYPARVT…GDFLLLLKVS (72 aa)) constitute a KHA domain.

The protein belongs to the potassium channel family. Plant (TC 1.A.1.4) subfamily. As to quaternary structure, the potassium channel is probably composed of a homo- or heterotetrameric complex of pore-forming subunits. As to expression, predominantly expressed in flowers.

It is found in the membrane. Probable potassium channel. May interact with the cytoskeleton or with regulatory proteins. The protein is Probable potassium channel AKT5 (AKT5) of Arabidopsis thaliana (Mouse-ear cress).